Reading from the N-terminus, the 169-residue chain is uncharacterized protein (169 aa).

Helical transmembrane passes span 62 to 84 (RWGFFAGGLIFLVSSAIMYLLGL) and 94 to 116 (ALMLFVLPTAFLFVSLLLLYWWF).

It is found in the cell membrane. This is an uncharacterized protein from Archaeoglobus fulgidus (strain ATCC 49558 / DSM 4304 / JCM 9628 / NBRC 100126 / VC-16).